Consider the following 563-residue polypeptide: Arginine--tRNA ligase (563 aa).

Residues 121 to 131 (PNIAKPFSIGH) carry the 'HIGH' region motif.

It belongs to the class-I aminoacyl-tRNA synthetase family. In terms of assembly, monomer.

The protein localises to the cytoplasm. The enzyme catalyses tRNA(Arg) + L-arginine + ATP = L-arginyl-tRNA(Arg) + AMP + diphosphate. The polypeptide is Arginine--tRNA ligase (Streptococcus agalactiae serotype Ia (strain ATCC 27591 / A909 / CDC SS700)).